A 181-amino-acid polypeptide reads, in one-letter code: Early E3 20.3 kDa glycoprotein (181 aa).

N-linked (GlcNAc...) asparagine; by host glycosylation is found at asparagine 29, asparagine 57, asparagine 70, and asparagine 75.

The protein belongs to the adenoviridae E3_20 family.

Functionally, E3 proteins seem to be dispensable for virus growth in tissue culture cells. They are potentially important for virus growth under special conditions; E3 region may help adenoviruses to evade the immune surveillance of the host. In Homo sapiens (Human), this protein is Early E3 20.3 kDa glycoprotein.